The primary structure comprises 425 residues: Palmitoyltransferase ZDHHC23 (425 aa).

Residues 1–81 (MKPVKKKKTE…RIPWLRGAKK (81 aa)) lie on the Cytoplasmic side of the membrane. Residues 82–99 (VNISIVPPLVLLPVFLHV) form a helical membrane-spanning segment. The Lumenal segment spans residues 100–102 (ASW). The helical transmembrane segment at 103–125 (HFLLGVVVLTSLPMLALWYYYLT) threads the bilayer. The Cytoplasmic portion of the chain corresponds to 126-130 (HRRKE). The chain crosses the membrane as a helical span at residues 131-151 (QTLFFLSLGLFSLGYMYYVFL). Residues 152 to 159 (REVVPQGR) lie on the Lumenal side of the membrane. A helical transmembrane segment spans residues 160–180 (VGPTQLALLTCGLLLILLALY). Residues 181-292 (RAKKNPGYLS…NSCVGESNHQ (112 aa)) are Cytoplasmic-facing. The region spanning 249 to 299 (DWCAKCQLVRPARAWHCRICGICVRRMDHHCVWINSCVGESNHQAFILALS) is the DHHC domain. Cys-279 (S-palmitoyl cysteine intermediate) is an active-site residue. Residues 293–313 (AFILALSIFLLTSVYGISLTL) traverse the membrane as a helical segment. At 314-343 (NTICRDRSLFTALFYCPGVYANYSSALSFT) the chain is on the lumenal side. The chain crosses the membrane as a helical span at residues 344–364 (CVWYSVIITAGMAYIFLIQLI). The Cytoplasmic segment spans residues 365-425 (NISYNVTERE…TVHTPAEDIV (61 aa)). The interaction with NOS1 stretch occupies residues 422 to 425 (EDIV).

It belongs to the DHHC palmitoyltransferase family. As to quaternary structure, interacts with NOS1. Expressed in the brain.

It is found in the golgi apparatus membrane. The protein resides in the golgi apparatus. It localises to the trans-Golgi network membrane. It catalyses the reaction L-cysteinyl-[protein] + hexadecanoyl-CoA = S-hexadecanoyl-L-cysteinyl-[protein] + CoA. Palmitoyltransferase that could catalyze the addition of palmitate onto various protein substrates and be involved in a variety of cellular processes. Palmitoyltransferase that mediates palmitoylation of KCNMA1, regulating localization of KCNMA1 to the plasma membrane. May be involved in NOS1 regulation and targeting to the synaptic membrane. The protein is Palmitoyltransferase ZDHHC23 of Mus musculus (Mouse).